A 488-amino-acid polypeptide reads, in one-letter code: 3-octaprenyl-4-hydroxybenzoate carboxy-lyase (488 aa).

A Mn(2+)-binding site is contributed by N172. Residues 175–177 (IYR), 189–191 (RWL), and 194–195 (RG) contribute to the prenylated FMN site. E238 contributes to the Mn(2+) binding site. The active-site Proton donor is D287.

The protein belongs to the UbiD family. In terms of assembly, homohexamer. It depends on prenylated FMN as a cofactor. Mn(2+) is required as a cofactor.

The protein localises to the cell membrane. The enzyme catalyses a 4-hydroxy-3-(all-trans-polyprenyl)benzoate + H(+) = a 2-(all-trans-polyprenyl)phenol + CO2. Its pathway is cofactor biosynthesis; ubiquinone biosynthesis. Catalyzes the decarboxylation of 3-octaprenyl-4-hydroxy benzoate to 2-octaprenylphenol, an intermediate step in ubiquinone biosynthesis. This is 3-octaprenyl-4-hydroxybenzoate carboxy-lyase from Pseudomonas aeruginosa (strain LESB58).